Consider the following 250-residue polypeptide: uncharacterized protein (250 aa).

A divalent metal cation contacts are provided by glutamate 97, glutamate 99, and aspartate 128.

This sequence belongs to the FAH family.

This is an uncharacterized protein from Archaeoglobus fulgidus (strain ATCC 49558 / DSM 4304 / JCM 9628 / NBRC 100126 / VC-16).